Reading from the N-terminus, the 644-residue chain is Complement component C1q receptor (644 aa).

Positions 1 to 22 (MAISTGLFLLLGLLGQPWAGAA) are cleaved as a signal peptide. The Extracellular segment spans residues 23-572 (ADSQAVVCEG…SAHSDTDGQN (550 aa)). The 143-residue stretch at 31–173 (EGTACYTAHW…CGTPEAPGNS (143 aa)) folds into the C-type lectin domain. Asn-102 carries N-linked (GlcNAc...) asparagine glycosylation. Disulfide bonds link Cys-140–Cys-164, Cys-261–Cys-272, Cys-268–Cys-282, Cys-284–Cys-297, Cys-303–Cys-314, Cys-308–Cys-325, Cys-327–Cys-340, Cys-346–Cys-355, Cys-351–Cys-364, Cys-366–Cys-380, Cys-386–Cys-397, Cys-393–Cys-406, Cys-408–Cys-422, Cys-428–Cys-440, Cys-436–Cys-449, and Cys-451–Cys-464. EGF-like domains follow at residues 257-298 (PKFG…VTCA) and 299-341 (SRNP…VHCV). Asn-322 is a glycosylation site (N-linked (GlcNAc...) asparagine). One can recognise an EGF-like 3; calcium-binding domain in the interval 342–381 (DIDECQDSPCAQDCVNTLGSFHCECWVGYQPSGPKEEACE). Positions 382-423 (DVDECAAANSPCAQGCINTDGSFYCSCKEGYIVSGEDSTQCE) constitute an EGF-like 4; calcium-binding domain. An EGF-like 5; calcium-binding domain is found at 424-465 (DIDECSDARGNPCDSLCFNTDGSFRCGCPPGWELAPNGVFCS). The disordered stretch occupies residues 473-508 (LPARPPQKEDNDDRKESTMPPTEMPSSPSGSKDVSN). The segment covering 478–489 (PQKEDNDDRKES) has biased composition (basic and acidic residues). The span at 490–501 (TMPPTEMPSSPS) shows a compositional bias: low complexity. Residues 573–593 (LLLFYILGTVVAISLLLVLAL) form a helical membrane-spanning segment. The Cytoplasmic segment spans residues 594-644 (GILIYHKRRAKKEEIKEKKPQNAADSYSWVPERAESQAPENQYSPTPGTDC). The segment at 605 to 644 (KEEIKEKKPQNAADSYSWVPERAESQAPENQYSPTPGTDC) is disordered. A Phosphoserine modification is found at Ser-619. 2 positions are modified to phosphotyrosine: Tyr-620 and Tyr-636. Residues 631–644 (APENQYSPTPGTDC) are compositionally biased toward polar residues.

In terms of assembly, homodimer. Interacts with C1QBP; the association may represent a cell surface C1q receptor. Interacts with surfactant protein A/SFTPA1. Interacts with multimerin-2/MMRN2. Interacts with DAG1; this interaction plays an important role in endothelial cell migration. Interacts with CBL. Interacts with IGFBP7. Interacts with VEGFR2. N- and O-glycosylated. In terms of processing, phosphorylated on Tyr-620 and Tyr-636 by SRC; these phosphorylations promote endothelial cell adhesion and migration. In terms of tissue distribution, expressed in lung, heart and bone marrow. Expressed at lower level in ovary, whole embryo and fetal liver. Not detected in brain, adult liver or thymus. Highly expressed in peritoneal cavity and bone marrow macrophages. Not detected in epithelial cells.

It is found in the cell membrane. In terms of biological role, cell surface receptor that plays a role in various physiological processes including inflammation, phagocytosis, and cell adhesion. Plays a role in phagocytosis and enhances the uptake of apoptotic cells and immune complexes by acting as a receptor for defense collagens including surfactant protein A/SFTPA1, C1q, and mannose-binding lectin (MBL2). Plays a role in the regulation of endothelial cell function and adhesion by activating angiogenesis. Mechanistically, exerts its angiogenic function by associating with beta-dystroglycan, leading to SRC-dependent phosphorylation and subsequent recruitment of CBL. In turn, CBL provides a docking site for downstream signaling components, such as CRKL to enhance cell migration. Participates in angiogenesis also by acting as a receptor for the ECM pan-endothelial glycoprotein multimerin-2/MMRN2 and IGFBP7 ligands. Both ligands play a non-redundant role in CD93-mediated endothelial cell function. Acts as a key regulator of endothelial barrier function through modulating VEGFR2 function. The protein is Complement component C1q receptor (Cd93) of Mus musculus (Mouse).